The primary structure comprises 388 residues: Galactokinase (388 aa).

33 to 36 (EHTD) lines the substrate pocket. ATP is bound by residues Ser-67 and 124–130 (GAGLSSS). Ser-130 and Glu-162 together coordinate Mg(2+). Asp-174 serves as the catalytic Proton acceptor. Tyr-224 is a substrate binding site.

The protein belongs to the GHMP kinase family. GalK subfamily.

Its subcellular location is the cytoplasm. It catalyses the reaction alpha-D-galactose + ATP = alpha-D-galactose 1-phosphate + ADP + H(+). Its pathway is carbohydrate metabolism; galactose metabolism. Functionally, catalyzes the transfer of the gamma-phosphate of ATP to D-galactose to form alpha-D-galactose-1-phosphate (Gal-1-P). This Lacticaseibacillus paracasei (strain ATCC 334 / BCRC 17002 / CCUG 31169 / CIP 107868 / KCTC 3260 / NRRL B-441) (Lactobacillus paracasei) protein is Galactokinase.